We begin with the raw amino-acid sequence, 83 residues long: Short neurotoxin 3FTx-Oxy4 (83 aa).

An N-terminal signal peptide occupies residues 1 to 21; that stretch reads MKTLLLTLVVVTIVCLDLGYT. 4 cysteine pairs are disulfide-bonded: cysteine 24–cysteine 45, cysteine 38–cysteine 62, cysteine 64–cysteine 75, and cysteine 76–cysteine 81.

The protein belongs to the three-finger toxin family. Short-chain subfamily. Type I alpha-neurotoxin sub-subfamily. In terms of tissue distribution, expressed by the venom gland.

It is found in the secreted. Binds to muscle nicotinic acetylcholine receptor (nAChR) and inhibit acetylcholine from binding to the receptor, thereby impairing neuromuscular transmission. This is Short neurotoxin 3FTx-Oxy4 from Oxyuranus microlepidotus (Inland taipan).